A 456-amino-acid polypeptide reads, in one-letter code: Amino acid transporter AVT6B (456 aa).

Transmembrane regions (helical) follow at residues 37-57, 58-78, 118-138, 164-184, 191-211, 236-256, 273-293, 328-348, 365-385, 388-408, and 423-443; these read FSGA…MALP, ATMK…MAFL, ILVS…DVLA, TFVL…FKRI, SAIS…ITII, LFTV…VHSI, ALAM…LLFG, LMLV…GLIF, SITA…PSIW, FQFT…AAVI, and IAIC…YSDA.

The protein belongs to the amino acid/polyamine transporter 2 family. Amino acid/auxin permease (AAAP) (TC 2.A.18.6) subfamily.

The protein resides in the membrane. The protein is Amino acid transporter AVT6B of Arabidopsis thaliana (Mouse-ear cress).